The primary structure comprises 643 residues: Long-chain fatty acid transport protein 4 (643 aa).

A run of 2 helical transmembrane segments spans residues 20-42 (LPWT…WRFI) and 139-156 (FVGL…AALI). 243–254 (YIYTSGTTGLPK) lines the AMP pocket.

It belongs to the ATP-dependent AMP-binding enzyme family.

It is found in the endoplasmic reticulum membrane. It carries out the reaction a fatty acid(in) = a fatty acid(out). The enzyme catalyses (9Z,12Z)-octadecadienoate(out) = (9Z,12Z)-octadecadienoate(in). It catalyses the reaction (9Z)-octadecenoate(out) = (9Z)-octadecenoate(in). The catalysed reaction is hexadecanoate(out) = hexadecanoate(in). It carries out the reaction a long-chain fatty acid + ATP + CoA = a long-chain fatty acyl-CoA + AMP + diphosphate. The enzyme catalyses (5Z,8Z,11Z,14Z)-eicosatetraenoate + ATP + CoA = (5Z,8Z,11Z,14Z)-eicosatetraenoyl-CoA + AMP + diphosphate. It catalyses the reaction (9Z)-octadecenoate + ATP + CoA = (9Z)-octadecenoyl-CoA + AMP + diphosphate. The catalysed reaction is hexadecanoate + ATP + CoA = hexadecanoyl-CoA + AMP + diphosphate. It carries out the reaction (E)-hexadec-2-enoate + ATP + CoA = (2E)-hexadecenoyl-CoA + AMP + diphosphate. The enzyme catalyses a very long-chain fatty acid + ATP + CoA = a very long-chain fatty acyl-CoA + AMP + diphosphate. It catalyses the reaction tetracosanoate + ATP + CoA = tetracosanoyl-CoA + AMP + diphosphate. In terms of biological role, mediates the import of long-chain fatty acids (LCFA) into the cell by facilitating their transport across cell membranes. Appears to be the principal fatty acid transporter in small intestinal enterocytes. Also functions as an acyl-CoA ligase catalyzing the ATP-dependent formation of fatty acyl-CoA using LCFA and very-long-chain fatty acids (VLCFA) as substrates, which prevents fatty acid efflux from cells and might drive more fatty acid uptake. Plays a role in the formation of the epidermal barrier. Required for fat absorption in early embryogenesis. Probably involved in fatty acid transport across the blood barrier. Indirectly inhibits RPE65 via substrate competition and via production of VLCFA derivatives like lignoceroyl-CoA. Prevents light-induced degeneration of rods and cones. This chain is Long-chain fatty acid transport protein 4 (SLC27A4), found in Pongo abelii (Sumatran orangutan).